The sequence spans 83 residues: Protein kreg-1 (83 aa).

Residues 62–83 form a disordered region; the sequence is GHHHHHHGHHFGHHHHHHHGHH.

Weakly expressed in the intestine, but expression is up-regulated in response to Cu(2+).

Plays a role in the stress response to heavy metals such as copper, probably in a fos-1/kgb-1-dependent manner. The sequence is that of Protein kreg-1 from Caenorhabditis elegans.